A 417-amino-acid chain; its full sequence is Gamma-glutamyl phosphate reductase (417 aa).

The protein belongs to the gamma-glutamyl phosphate reductase family.

Its subcellular location is the cytoplasm. The enzyme catalyses L-glutamate 5-semialdehyde + phosphate + NADP(+) = L-glutamyl 5-phosphate + NADPH + H(+). Its pathway is amino-acid biosynthesis; L-proline biosynthesis; L-glutamate 5-semialdehyde from L-glutamate: step 2/2. Functionally, catalyzes the NADPH-dependent reduction of L-glutamate 5-phosphate into L-glutamate 5-semialdehyde and phosphate. The product spontaneously undergoes cyclization to form 1-pyrroline-5-carboxylate. In Haemophilus influenzae (strain ATCC 51907 / DSM 11121 / KW20 / Rd), this protein is Gamma-glutamyl phosphate reductase.